Here is a 213-residue protein sequence, read N- to C-terminus: Pyrrolidone-carboxylate peptidase (213 aa).

Active-site residues include Glu-78, Cys-141, and His-165.

Belongs to the peptidase C15 family. In terms of assembly, homotetramer.

Its subcellular location is the cytoplasm. It catalyses the reaction Release of an N-terminal pyroglutamyl group from a polypeptide, the second amino acid generally not being Pro.. Removes 5-oxoproline from various penultimate amino acid residues except L-proline. This is Pyrrolidone-carboxylate peptidase from Staphylococcus saprophyticus subsp. saprophyticus (strain ATCC 15305 / DSM 20229 / NCIMB 8711 / NCTC 7292 / S-41).